The primary structure comprises 398 residues: Small ribosomal subunit protein mS78 (rPPR3a) (398 aa).

A mitochondrion-targeting transit peptide spans 1–19; the sequence is MSSLSRVLRGTFNTCPIRR. 7 PPR repeats span residues 108 to 142, 143 to 173, 179 to 213, 214 to 248, 249 to 283, 284 to 318, and 319 to 353; these read KEGF…DCKR, SVLS…LPGK, DIVS…GLKP, DIVT…NVAI, DIRT…GLKP, DVFS…GYRP, and DKAT…RYLV.

The protein belongs to the PPR family. P subfamily. Component of the mitochondrial ribosome small subunit.

It localises to the mitochondrion. This is Small ribosomal subunit protein mS78 (rPPR3a) from Arabidopsis thaliana (Mouse-ear cress).